A 502-amino-acid polypeptide reads, in one-letter code: Actin nucleation-promoting factor WAS (502 aa).

Residues 39-148 (LGRKCLTLAT…ALVQEKIQKR (110 aa)) enclose the WH1 domain. The segment at 146–240 (QKRNQRQSGD…KKISKADIGA (95 aa)) is disordered. Positions 201 to 211 (DIQNPDITSSR) are enriched in polar residues. Position 221 is a phosphoserine (serine 221). Positions 238 to 251 (IGAPSGFKHVSHVG) constitute a CRIB domain. Phosphotyrosine; by FYN and HCK is present on tyrosine 291. A disordered region spans residues 307–502 (MRRQEPLPPP…DEDEDDEWDD (196 aa)). GRSGPLPPXP motif repeat units follow at residues 337–346 (GRSGPLPPVP) and 376–385 (GRSGPLPPPP). Residues 341 to 419 (PLPPVPLGIA…PAPPPLPPAL (79 aa)) are compositionally biased toward pro residues. In terms of domain architecture, WH2 spans 430–447 (GRGALLDQIRQGIQLNKT). Phosphoserine; by CK2 is present on residues serine 483 and serine 484. Over residues 486-502 (EGEDQAGDEDEDDEWDD) the composition is skewed to acidic residues.

Binds the Arp2/3 complex. Interacts with CDC42, RAC, NCK, HCK, FYN, SRC kinase FGR, BTK, ABL1, PSTPIP1, WIP, and to the p85 subunit of PLC-gamma. Interacts (via C-terminus) with ALDOA. Interacts with NCK1 (via SH3 domains). Interacts with FCHSD2. As to quaternary structure, (Microbial infection) Interacts with E.coli effector protein EspF(U). Phosphorylated at Tyr-291 by FYN and HCK, inducing WAS effector activity after TCR engagement. Phosphorylation at Tyr-291 enhances WAS activity in promoting actin polymerization and filopodia formation. In terms of tissue distribution, expressed predominantly in the thymus. Also found, to a much lesser extent, in the spleen.

The protein localises to the cytoplasm. Its subcellular location is the cytoskeleton. It localises to the nucleus. Functionally, effector protein for Rho-type GTPases that regulates actin filament reorganization via its interaction with the Arp2/3 complex. Important for efficient actin polymerization. Possible regulator of lymphocyte and platelet function. Mediates actin filament reorganization and the formation of actin pedestals upon infection by pathogenic bacteria. In addition to its role in the cytoplasmic cytoskeleton, also promotes actin polymerization in the nucleus, thereby regulating gene transcription and repair of damaged DNA. Promotes homologous recombination (HR) repair in response to DNA damage by promoting nuclear actin polymerization, leading to drive motility of double-strand breaks (DSBs). This Homo sapiens (Human) protein is Actin nucleation-promoting factor WAS (WAS).